Reading from the N-terminus, the 179-residue chain is Large ribosomal subunit protein uL5 (179 aa).

The protein belongs to the universal ribosomal protein uL5 family. As to quaternary structure, part of the 50S ribosomal subunit; part of the 5S rRNA/L5/L18/L25 subcomplex. Contacts the 5S rRNA and the P site tRNA. Forms a bridge to the 30S subunit in the 70S ribosome.

In terms of biological role, this is one of the proteins that bind and probably mediate the attachment of the 5S RNA into the large ribosomal subunit, where it forms part of the central protuberance. In the 70S ribosome it contacts protein S13 of the 30S subunit (bridge B1b), connecting the 2 subunits; this bridge is implicated in subunit movement. Contacts the P site tRNA; the 5S rRNA and some of its associated proteins might help stabilize positioning of ribosome-bound tRNAs. The polypeptide is Large ribosomal subunit protein uL5 (Vibrio atlanticus (strain LGP32) (Vibrio splendidus (strain Mel32))).